The sequence spans 157 residues: MSKKVVDVVSEMVQPILDGLQLELVDVEFVKEGQNWFLRVFIDSDKGVDIEECAKVSEALSEKLDEADPISQNYFLEVSSPGAERPLKKKADFEKALGKNVFMKTYEPIDGEKAFEGELTSFDGEIATVTVKIKTRKKEINIPYEKIANARLAVSFN.

This sequence belongs to the RimP family.

It is found in the cytoplasm. Its function is as follows. Required for maturation of 30S ribosomal subunits. The sequence is that of Ribosome maturation factor RimP from Bacillus pumilus (strain SAFR-032).